The primary structure comprises 128 residues: Small ribosomal subunit protein uS12 (128 aa).

The interval Met-1 to Lys-30 is disordered. Asp-89 carries the post-translational modification 3-methylthioaspartic acid. Residues Gly-106–Lys-128 form a disordered region.

The protein belongs to the universal ribosomal protein uS12 family. As to quaternary structure, part of the 30S ribosomal subunit. Contacts proteins S8 and S17. May interact with IF1 in the 30S initiation complex.

In terms of biological role, with S4 and S5 plays an important role in translational accuracy. Functionally, interacts with and stabilizes bases of the 16S rRNA that are involved in tRNA selection in the A site and with the mRNA backbone. Located at the interface of the 30S and 50S subunits, it traverses the body of the 30S subunit contacting proteins on the other side and probably holding the rRNA structure together. The combined cluster of proteins S8, S12 and S17 appears to hold together the shoulder and platform of the 30S subunit. In Dictyoglomus thermophilum (strain ATCC 35947 / DSM 3960 / H-6-12), this protein is Small ribosomal subunit protein uS12.